A 413-amino-acid polypeptide reads, in one-letter code: Imidazolonepropionase (413 aa).

Residues histidine 79 and histidine 81 each coordinate Fe(3+). The Zn(2+) site is built by histidine 79 and histidine 81. 3 residues coordinate 4-imidazolone-5-propanoate: arginine 88, tyrosine 151, and histidine 184. N-formimidoyl-L-glutamate is bound at residue tyrosine 151. Histidine 248 serves as a coordination point for Fe(3+). Zn(2+) is bound at residue histidine 248. Glutamate 251 is a 4-imidazolone-5-propanoate binding site. Aspartate 322 is a Fe(3+) binding site. Residue aspartate 322 coordinates Zn(2+). Asparagine 324 and glycine 326 together coordinate N-formimidoyl-L-glutamate. Serine 327 contacts 4-imidazolone-5-propanoate.

Belongs to the metallo-dependent hydrolases superfamily. HutI family. The cofactor is Zn(2+). It depends on Fe(3+) as a cofactor.

Its subcellular location is the cytoplasm. The catalysed reaction is 4-imidazolone-5-propanoate + H2O = N-formimidoyl-L-glutamate. It participates in amino-acid degradation; L-histidine degradation into L-glutamate; N-formimidoyl-L-glutamate from L-histidine: step 3/3. In terms of biological role, catalyzes the hydrolytic cleavage of the carbon-nitrogen bond in imidazolone-5-propanoate to yield N-formimidoyl-L-glutamate. It is the third step in the universal histidine degradation pathway. This chain is Imidazolonepropionase, found in Fusobacterium nucleatum subsp. nucleatum (strain ATCC 25586 / DSM 15643 / BCRC 10681 / CIP 101130 / JCM 8532 / KCTC 2640 / LMG 13131 / VPI 4355).